A 356-amino-acid polypeptide reads, in one-letter code: Cytochrome c oxidase subunit 2 (356 aa).

A signal peptide spans 1 to 23 (MNKGLCNWRLFSLFGMMALLLAG). A cytochrome c oxidase subunit II region spans residues 24 to 259 (CGKPFLSTLQ…QNAKKPVVTD (236 aa)). Helical transmembrane passes span 45–65 (LMLL…IIFV) and 93–113 (IIWT…TVLT). Residues His-178, Cys-219, Cys-223, and His-227 each contribute to the Cu cation site. The Cytochrome c domain occupies 260-356 (PVAKEGEAIF…TKYLMSLKVE (97 aa)). Heme c is bound by residues Cys-273, Cys-276, His-277, and Met-331.

Belongs to the cytochrome c oxidase subunit 2 family. Cu cation is required as a cofactor. Requires heme c as cofactor.

It localises to the cell membrane. It catalyses the reaction 4 Fe(II)-[cytochrome c] + O2 + 8 H(+)(in) = 4 Fe(III)-[cytochrome c] + 2 H2O + 4 H(+)(out). Functionally, subunits I and II form the functional core of the enzyme complex. Electrons originating in cytochrome c are transferred via heme a and Cu(A) to the binuclear center formed by heme a3 and Cu(B). The protein is Cytochrome c oxidase subunit 2 (ctaC) of Bacillus sp. (strain PS3).